The chain runs to 345 residues: Opioid-binding protein/cell adhesion molecule (345 aa).

A signal peptide spans 1–27 (MGVCGYLFLPWKCLVVVSLRLLFLVPT). 3 Ig-like C2-type domains span residues 39–126 (PKAM…PKTS), 136–219 (PQIM…VKIT), and 223–310 (PPYI…ASIT). N-linked (GlcNAc...) asparagine glycosylation is found at Asn44, Asn70, and Asn140. Cys57 and Cys115 are joined by a disulfide. 2 disulfide bridges follow: Cys157–Cys202 and Cys244–Cys296. Asn285, Asn293, and Asn306 each carry an N-linked (GlcNAc...) asparagine glycan. A lipid anchor (GPI-anchor amidated asparagine) is attached at Asn322. The propeptide at 323–345 (SASRALACLWLSGTFFAHFFIKF) is removed in mature form.

This sequence belongs to the immunoglobulin superfamily. IgLON family.

It is found in the cell membrane. Functionally, binds opioids in the presence of acidic lipids; probably involved in cell contact. In Rattus norvegicus (Rat), this protein is Opioid-binding protein/cell adhesion molecule (Opcml).